The following is a 286-amino-acid chain: Homoserine kinase (286 aa).

Residue 78–88 (PLARGLGSSSS) participates in ATP binding.

The protein belongs to the GHMP kinase family. Homoserine kinase subfamily.

It localises to the cytoplasm. It catalyses the reaction L-homoserine + ATP = O-phospho-L-homoserine + ADP + H(+). Its pathway is amino-acid biosynthesis; L-threonine biosynthesis; L-threonine from L-aspartate: step 4/5. Catalyzes the ATP-dependent phosphorylation of L-homoserine to L-homoserine phosphate. In Streptococcus equi subsp. equi (strain 4047), this protein is Homoserine kinase.